The chain runs to 297 residues: tRNA uridine(34) hydroxylase (297 aa).

The 96-residue stretch at 133 to 228 (SGDEVVFFDG…YGETFKDQGL (96 aa)) folds into the Rhodanese domain. Cys-188 serves as the catalytic Cysteine persulfide intermediate.

It belongs to the TrhO family.

It catalyses the reaction uridine(34) in tRNA + AH2 + O2 = 5-hydroxyuridine(34) in tRNA + A + H2O. Functionally, catalyzes oxygen-dependent 5-hydroxyuridine (ho5U) modification at position 34 in tRNAs. In Pseudarthrobacter chlorophenolicus (strain ATCC 700700 / DSM 12829 / CIP 107037 / JCM 12360 / KCTC 9906 / NCIMB 13794 / A6) (Arthrobacter chlorophenolicus), this protein is tRNA uridine(34) hydroxylase.